Reading from the N-terminus, the 327-residue chain is Malate dehydrogenase (327 aa).

NAD(+) is bound by residues 20-25 (GAGRVG) and Asp44. Arg93 and Arg99 together coordinate substrate. Residues Asn106 and 129–131 (VTN) contribute to the NAD(+) site. Positions 131 and 162 each coordinate substrate. The Proton acceptor role is filled by His186.

This sequence belongs to the LDH/MDH superfamily. MDH type 3 family.

The catalysed reaction is (S)-malate + NAD(+) = oxaloacetate + NADH + H(+). Functionally, catalyzes the reversible oxidation of malate to oxaloacetate. This is Malate dehydrogenase from Nostoc punctiforme (strain ATCC 29133 / PCC 73102).